The following is a 220-amino-acid chain: Uracil-DNA glycosylase (220 aa).

Asp-65 acts as the Proton acceptor in catalysis.

The protein belongs to the uracil-DNA glycosylase (UDG) superfamily. UNG family.

It is found in the cytoplasm. The catalysed reaction is Hydrolyzes single-stranded DNA or mismatched double-stranded DNA and polynucleotides, releasing free uracil.. Functionally, excises uracil residues from the DNA which can arise as a result of misincorporation of dUMP residues by DNA polymerase or due to deamination of cytosine. The polypeptide is Uracil-DNA glycosylase (Bacteroides thetaiotaomicron (strain ATCC 29148 / DSM 2079 / JCM 5827 / CCUG 10774 / NCTC 10582 / VPI-5482 / E50)).